Reading from the N-terminus, the 324-residue chain is Cuticle collagen sqt-1 (324 aa).

Disordered regions lie at residues 68–108 (RRQY…TPNG) and 129–324 (SGPK…YRNI). Residues 87–97 (SAPPGQPPAVP) show a composition bias toward pro residues. Triple-helical region stretches follow at residues 127–153 (GPSG…PGVG), 171–231 (QGPV…KGRD), and 237–299 (GRPG…PGKD). 2 stretches are compositionally biased toward low complexity: residues 129 to 156 (SGPK…GADD) and 177 to 201 (PGAL…PGRD). Over residues 227-236 (EKGRDAEHPI) the composition is skewed to basic and acidic residues.

Belongs to the cuticular collagen family. Collagen polypeptide chains are complexed within the cuticle by disulfide bonds and other types of covalent cross-links.

In terms of biological role, nematode cuticles are composed largely of collagen-like proteins. The cuticle functions both as an exoskeleton and as a barrier to protect the worm from its environment. This is a collagen critical for organismal morphogenesis. Mutations in sqt-1 can lengthen, shorten, or helically twist the entire animal. The polypeptide is Cuticle collagen sqt-1 (sqt-1) (Caenorhabditis elegans).